The primary structure comprises 237 residues: Bax inhibitor 1 (237 aa).

The Cytoplasmic portion of the chain corresponds to 1 to 29 (MNIFDRKINFDALLKFSHITPSTQQHLKK). Lys-7 participates in a covalent cross-link: Glycyl lysine isopeptide (Lys-Gly) (interchain with G-Cter in ubiquitin). Residues 30–50 (VYASFALCMFVAAAGAYVHVV) form a helical membrane-spanning segment. Residues 51 to 52 (TR) are Lumenal-facing. Residues 53–73 (FIQAGLLSALGSLGLMIWLMA) traverse the membrane as a helical segment. Residues 74–86 (TPHSHETEQKRLG) lie on the Cytoplasmic side of the membrane. The chain crosses the membrane as a helical span at residues 87 to 107 (LLAGFAFLTGVGLGPALDLCI). Topologically, residues 108-112 (AINPS) are lumenal. A helical membrane pass occupies residues 113–133 (ILPTAFMGTAMIFTCFTLSAL). The Cytoplasmic portion of the chain corresponds to 134–139 (YARRRS). Residues 140-160 (YLFLGGILMSAMSLMVLSSLG) traverse the membrane as a helical segment. At 161–166 (NLFFGS) the chain is on the lumenal side. The helical transmembrane segment at 167 to 187 (IWLFQANLYVGLVVMCGFVLF) threads the bilayer. The Cytoplasmic portion of the chain corresponds to 188–206 (DTQLIIEKAENGDKDYIWH). An intramembrane region (helical) is located at residues 207-227 (CVDLFSDFVTLFRKLMMILAM). Residues 228-237 (NEKDKKKEKK) lie on the Cytoplasmic side of the membrane.

The protein belongs to the BI1 family. In terms of assembly, interacts with BCL2 and BCL2L1. Interacts with ERN1. Ubiquitinated by BFAR, leading to proteasomal degradation.

It localises to the endoplasmic reticulum membrane. Functionally, endoplasmic reticulum (ER)-resident protein that confers cellular protection as an anti-apoptotic protein by limiting multiple stress-inducing pathways surrounding the endoplasmic reticulum and mitochondria. Inhibits the activities of the key sensor for the endoplasmic reticulum unfolded protein response IRE1alpha/ERN1 both directly and by blocking BAX/BAK binding. Modulates ER calcium homeostasis by acting as a calcium-leak channel. Negatively regulates autophagy and autophagosome formation, especially during periods of nutrient deprivation, and reduces cell survival during starvation. This is Bax inhibitor 1 (TMBIM6) from Sus scrofa (Pig).